The chain runs to 205 residues: Small ribosomal subunit protein uS5 (205 aa).

The tract at residues 1–25 (MSGAQRGQRGGERRGGRDDRRGQGA) is disordered. Over residues 9–24 (RGGERRGGRDDRRGQG) the composition is skewed to basic and acidic residues. The S5 DRBM domain occupies 30–93 (YIERVVAINR…EEAKKHFFRV (64 aa)).

This sequence belongs to the universal ribosomal protein uS5 family. In terms of assembly, part of the 30S ribosomal subunit. Contacts proteins S4 and S8.

Its function is as follows. With S4 and S12 plays an important role in translational accuracy. Functionally, located at the back of the 30S subunit body where it stabilizes the conformation of the head with respect to the body. This is Small ribosomal subunit protein uS5 from Nocardioides sp. (strain ATCC BAA-499 / JS614).